The following is a 315-amino-acid chain: tRNA U34 carboxymethyltransferase (315 aa).

Residues lysine 79, tryptophan 93, lysine 98, glycine 117, 142–144 (DPS), 169–170 (VE), tyrosine 193, and arginine 307 each bind carboxy-S-adenosyl-L-methionine.

Belongs to the class I-like SAM-binding methyltransferase superfamily. CmoB family. Homotetramer.

It catalyses the reaction carboxy-S-adenosyl-L-methionine + 5-hydroxyuridine(34) in tRNA = 5-carboxymethoxyuridine(34) in tRNA + S-adenosyl-L-homocysteine + H(+). Its function is as follows. Catalyzes carboxymethyl transfer from carboxy-S-adenosyl-L-methionine (Cx-SAM) to 5-hydroxyuridine (ho5U) to form 5-carboxymethoxyuridine (cmo5U) at position 34 in tRNAs. The chain is tRNA U34 carboxymethyltransferase from Helicobacter hepaticus (strain ATCC 51449 / 3B1).